The chain runs to 373 residues: 3',5'-bisphosphate nucleotidase AHL (373 aa).

The active-site Proton acceptor is D52. Mg(2+) contacts are provided by E77, D144, V146, and D147. T149 acts as the Proton acceptor in catalysis. Positions 149, 281, 284, 298, and 310 each coordinate adenosine 3',5'-bisphosphate. Residues S281, K284, K298, and D310 each coordinate AMP. D310 serves as a coordination point for Mg(2+).

It belongs to the inositol monophosphatase superfamily. Mg(2+) is required as a cofactor. In terms of tissue distribution, expressed in roots, leaves, stems, flowers and siliques.

It catalyses the reaction adenosine 3',5'-bisphosphate + H2O = AMP + phosphate. The enzyme catalyses 3'-phosphoadenylyl sulfate + H2O = adenosine 5'-phosphosulfate + phosphate. With respect to regulation, inhibited by Li(+) (IC(50)=10 mM), Na(+) (IC(50)=50 mM) and Ca(2+) (IC(50)=0.06 mM). Phosphatase that converts adenosine 3'-phosphate 5'-phosphosulfate (PAPS) to adenosine 5'-phosphosulfate (APS) and 3'-phosphoadenosine 5'-phosphate (3'-PAP) to AMP. May regulate the flux of sulfur in the sulfur-activation pathway by converting PAPS to APS. Prevents both the toxicity of PAP on RNA processing enzymes as well as the product inhibition by PAP of sulfate conjugation. In Arabidopsis thaliana (Mouse-ear cress), this protein is 3',5'-bisphosphate nucleotidase AHL.